Reading from the N-terminus, the 340-residue chain is Protein S-acyltransferase 10 (340 aa).

Helical transmembrane passes span 34–54 (LLLK…LFLF) and 66–86 (PWYM…YFVT). Residues 162–212 (LTCGYCHVEQPPRTKHCHDCDRCVLQFDHHCVWLGTCIGQKNHSKFWWYIC) form the DHHC domain. Cys192 serves as the catalytic S-palmitoyl cysteine intermediate. A run of 2 helical transmembrane segments spans residues 207–227 (FWWY…MYVD) and 241–261 (IIIL…LLLI).

Belongs to the DHHC palmitoyltransferase family. Expressed in mature embryos, embryo sacs, cotyledons, whole seedlings, hydathodes, guard cells, sites of lateral root initiation, root tips and phloem, but not in xylem.

It localises to the vacuole membrane. The catalysed reaction is L-cysteinyl-[protein] + hexadecanoyl-CoA = S-hexadecanoyl-L-cysteinyl-[protein] + CoA. Its function is as follows. S-acyltransferase involved in protein lipid modification. Catalyzes the palmitoylation of proteins peripheral or integral to the tonoplast. Required for the tonoplast localization of CBL2, CBL3 and CBL6, but not for the plasma membrane localization of CBL9, for the endosome localization of RABF1 or for the endomembrane localization of RABF2B. The chain is Protein S-acyltransferase 10 (PAT10) from Arabidopsis thaliana (Mouse-ear cress).